Consider the following 155-residue polypeptide: Large ribosomal subunit protein uL22c (155 aa).

It belongs to the universal ribosomal protein uL22 family. In terms of assembly, part of the 50S ribosomal subunit.

The protein localises to the plastid. It localises to the chloroplast. In terms of biological role, this protein binds specifically to 23S rRNA. Its function is as follows. The globular domain of the protein is located near the polypeptide exit tunnel on the outside of the subunit, while an extended beta-hairpin is found that lines the wall of the exit tunnel in the center of the 70S ribosome. In Solanum bulbocastanum (Wild potato), this protein is Large ribosomal subunit protein uL22c (rpl22).